The primary structure comprises 170 residues: Photosystem II extrinsic protein V (170 aa).

An N-terminal signal peptide occupies residues 1 to 33 (MASVFSSLRRSLKGLLVLIPVLIGLAVTSPAQA). Heme c-binding residues include C70, C73, H74, and H125.

The protein belongs to the cytochrome c family. PsbV subfamily. PSII is composed of 1 copy each of membrane proteins PsbA, PsbB, PsbC, PsbD, PsbE, PsbF, PsbH, PsbI, PsbJ, PsbK, PsbL, PsbM, PsbT, PsbX, PsbY, PsbZ, Psb30/Ycf12, peripheral proteins PsbO, CyanoQ (PsbQ), PsbU, PsbV and a large number of cofactors. It forms dimeric complexes. It depends on heme c as a cofactor.

It is found in the cellular thylakoid membrane. Functionally, one of the extrinsic, lumenal subunits of photosystem II (PSII). PSII is a light-driven water plastoquinone oxidoreductase, using light energy to abstract electrons from H(2)O, generating a proton gradient subsequently used for ATP formation. The extrinsic proteins stabilize the structure of photosystem II oxygen-evolving complex (OEC), the ion environment of oxygen evolution and protect the OEC against heat-induced inactivation. Low-potential cytochrome c that plays a role in the OEC of PSII. This Synechococcus sp. (strain CC9605) protein is Photosystem II extrinsic protein V.